A 364-amino-acid chain; its full sequence is Putative protein C31H2.4 (364 aa).

VOC domains are found at residues 6-134 (AIHH…LGEF) and 161-320 (LMDH…IFSK). Fe cation contacts are provided by H164, H248, and E331.

This sequence belongs to the 4HPPD family. It depends on Fe cation as a cofactor.

In Caenorhabditis elegans, this protein is Putative protein C31H2.4.